A 430-amino-acid polypeptide reads, in one-letter code: Glutamate-1-semialdehyde 2,1-aminomutase (430 aa).

Position 270 is an N6-(pyridoxal phosphate)lysine (K270).

It belongs to the class-III pyridoxal-phosphate-dependent aminotransferase family. HemL subfamily. Homodimer. Pyridoxal 5'-phosphate serves as cofactor.

It localises to the cytoplasm. The enzyme catalyses (S)-4-amino-5-oxopentanoate = 5-aminolevulinate. It functions in the pathway porphyrin-containing compound metabolism; protoporphyrin-IX biosynthesis; 5-aminolevulinate from L-glutamyl-tRNA(Glu): step 2/2. This chain is Glutamate-1-semialdehyde 2,1-aminomutase, found in Cupriavidus metallidurans (strain ATCC 43123 / DSM 2839 / NBRC 102507 / CH34) (Ralstonia metallidurans).